The sequence spans 152 residues: Transcriptional regulator MraZ (152 aa).

SpoVT-AbrB domains lie at 5 to 52 (ATMV…PLPE) and 81 to 124 (ASEC…DEQT).

It belongs to the MraZ family. Forms oligomers.

Its subcellular location is the cytoplasm. The protein localises to the nucleoid. Its function is as follows. Negatively regulates its own expression and that of the subsequent genes in the proximal part of the division and cell wall (dcw) gene cluster. Acts by binding directly to DNA. May also regulate the expression of genes outside the dcw cluster. This is Transcriptional regulator MraZ from Serratia proteamaculans (strain 568).